The following is a 476-amino-acid chain: Bifunctional protein GlmU (476 aa).

A pyrophosphorylase region spans residues 1 to 232; that stretch reads MDNLAAIILA…PVEVMGINDR (232 aa). Residues 9–12, Lys-23, Gln-75, and 80–81 each bind UDP-N-acetyl-alpha-D-glucosamine; these read LAAG and GT. Asp-105 provides a ligand contact to Mg(2+). The UDP-N-acetyl-alpha-D-glucosamine site is built by Gly-142, Glu-157, Asn-172, and Asn-230. Asn-230 provides a ligand contact to Mg(2+). Residues 233-253 form a linker region; sequence VQLAEAARHARRRIAEEHMLN. The N-acetyltransferase stretch occupies residues 254–476; the sequence is GVTLVDPAAT…EGWKLRKRDQ (223 aa). Positions 353 and 371 each coordinate UDP-N-acetyl-alpha-D-glucosamine. His-383 functions as the Proton acceptor in the catalytic mechanism. Residues Tyr-386 and Asn-397 each contribute to the UDP-N-acetyl-alpha-D-glucosamine site. Residues 406–407, Ser-425, Ala-443, and Arg-460 each bind acetyl-CoA; that span reads NY.

It in the N-terminal section; belongs to the N-acetylglucosamine-1-phosphate uridyltransferase family. In the C-terminal section; belongs to the transferase hexapeptide repeat family. Homotrimer. Mg(2+) is required as a cofactor.

Its subcellular location is the cytoplasm. It catalyses the reaction alpha-D-glucosamine 1-phosphate + acetyl-CoA = N-acetyl-alpha-D-glucosamine 1-phosphate + CoA + H(+). It carries out the reaction N-acetyl-alpha-D-glucosamine 1-phosphate + UTP + H(+) = UDP-N-acetyl-alpha-D-glucosamine + diphosphate. Its pathway is nucleotide-sugar biosynthesis; UDP-N-acetyl-alpha-D-glucosamine biosynthesis; N-acetyl-alpha-D-glucosamine 1-phosphate from alpha-D-glucosamine 6-phosphate (route II): step 2/2. It participates in nucleotide-sugar biosynthesis; UDP-N-acetyl-alpha-D-glucosamine biosynthesis; UDP-N-acetyl-alpha-D-glucosamine from N-acetyl-alpha-D-glucosamine 1-phosphate: step 1/1. It functions in the pathway bacterial outer membrane biogenesis; LPS lipid A biosynthesis. Its function is as follows. Catalyzes the last two sequential reactions in the de novo biosynthetic pathway for UDP-N-acetylglucosamine (UDP-GlcNAc). The C-terminal domain catalyzes the transfer of acetyl group from acetyl coenzyme A to glucosamine-1-phosphate (GlcN-1-P) to produce N-acetylglucosamine-1-phosphate (GlcNAc-1-P), which is converted into UDP-GlcNAc by the transfer of uridine 5-monophosphate (from uridine 5-triphosphate), a reaction catalyzed by the N-terminal domain. The chain is Bifunctional protein GlmU from Geobacter sulfurreducens (strain ATCC 51573 / DSM 12127 / PCA).